The following is a 1375-amino-acid chain: DNA-directed RNA polymerase subunit beta (1375 aa).

Belongs to the RNA polymerase beta chain family. As to quaternary structure, the RNAP catalytic core consists of 2 alpha, 1 beta, 1 beta' and 1 omega subunit. When a sigma factor is associated with the core the holoenzyme is formed, which can initiate transcription.

It carries out the reaction RNA(n) + a ribonucleoside 5'-triphosphate = RNA(n+1) + diphosphate. In terms of biological role, DNA-dependent RNA polymerase catalyzes the transcription of DNA into RNA using the four ribonucleoside triphosphates as substrates. The sequence is that of DNA-directed RNA polymerase subunit beta from Methylorubrum populi (strain ATCC BAA-705 / NCIMB 13946 / BJ001) (Methylobacterium populi).